A 151-amino-acid polypeptide reads, in one-letter code: MKRSGILNAELGEALATLGHTDLLLVVDAGFPVPRDAHRIDLALAENLPDLRTVLGLIADELVVEGVVRAEDVPSHNPRLDSWLHERFSGAEFTTRPHAEVLGELAREAKAVVRTGAFEPWGNIGLYCGVDAPRWFGGEGVVVPEQYASKV.

Histidine 20 acts as the Proton donor in catalysis. Substrate contacts are provided by residues aspartate 28, histidine 98, and 121–123 (WGN).

It belongs to the RbsD / FucU family. RbsD subfamily. In terms of assembly, homodecamer.

The protein localises to the cytoplasm. It catalyses the reaction beta-D-ribopyranose = beta-D-ribofuranose. It functions in the pathway carbohydrate metabolism; D-ribose degradation; D-ribose 5-phosphate from beta-D-ribopyranose: step 1/2. Catalyzes the interconversion of beta-pyran and beta-furan forms of D-ribose. This is D-ribose pyranase 1 from Streptomyces griseus subsp. griseus (strain JCM 4626 / CBS 651.72 / NBRC 13350 / KCC S-0626 / ISP 5235).